Reading from the N-terminus, the 327-residue chain is Undecaprenyl-phosphate 4-deoxy-4-formamido-L-arabinose transferase (327 aa).

The next 2 membrane-spanning stretches (helical) occupy residues 236–256 (LSLV…LLVV) and 270–290 (VFTL…GMGL).

Belongs to the glycosyltransferase 2 family.

It is found in the cell inner membrane. The enzyme catalyses UDP-4-deoxy-4-formamido-beta-L-arabinose + di-trans,octa-cis-undecaprenyl phosphate = 4-deoxy-4-formamido-alpha-L-arabinopyranosyl di-trans,octa-cis-undecaprenyl phosphate + UDP. It functions in the pathway glycolipid biosynthesis; 4-amino-4-deoxy-alpha-L-arabinose undecaprenyl phosphate biosynthesis; 4-amino-4-deoxy-alpha-L-arabinose undecaprenyl phosphate from UDP-4-deoxy-4-formamido-beta-L-arabinose and undecaprenyl phosphate: step 1/2. It participates in bacterial outer membrane biogenesis; lipopolysaccharide biosynthesis. In terms of biological role, catalyzes the transfer of 4-deoxy-4-formamido-L-arabinose from UDP to undecaprenyl phosphate. The modified arabinose is attached to lipid A and is required for resistance to polymyxin and cationic antimicrobial peptides. The polypeptide is Undecaprenyl-phosphate 4-deoxy-4-formamido-L-arabinose transferase (Yersinia enterocolitica serotype O:8 / biotype 1B (strain NCTC 13174 / 8081)).